The chain runs to 208 residues: Endoplasmic reticulum vesicle protein 25 (208 aa).

The first 15 residues, Met-1–Ala-15, serve as a signal peptide directing secretion. The Lumenal segment spans residues Leu-16–Arg-177. Residues Gln-28–Ser-118 enclose the GOLD domain. The helical transmembrane segment at Asn-178 to Leu-198 threads the bilayer. Over Lys-199–Ile-208 the chain is Cytoplasmic.

This sequence belongs to the EMP24/GP25L family.

It localises to the endoplasmic reticulum membrane. It is found in the golgi apparatus membrane. Functionally, constituent of COPII-coated endoplasmic reticulum-derived transport vesicles. Required for efficient transport of a subset of secretory proteins to the Golgi. Facilitates retrograde transport from the Golgi to the endoplasmic reticulum. This Candida glabrata (strain ATCC 2001 / BCRC 20586 / JCM 3761 / NBRC 0622 / NRRL Y-65 / CBS 138) (Yeast) protein is Endoplasmic reticulum vesicle protein 25 (ERV25).